The following is a 580-amino-acid chain: Phosphatase and actin regulator 1 (580 aa).

2 positions are modified to phosphoserine: Ser-67 and Ser-78. Thr-104 bears the Phosphothreonine mark. A Nuclear localization signal motif is present at residues 108–129 (RRRSKFANLGRIFKPWKWRKKK). The stretch at 138–163 (AALERKISMRQSREELIKRGVLKEIY) is one RPEL 1 repeat. The segment at 331–351 (EQRVPCSTSYHSSGLHSSDGV) is disordered. Residues 337–348 (STSYHSSGLHSS) are compositionally biased toward low complexity. 3 RPEL repeats span residues 422–447 (DSLA…PRQT), 460–485 (TKLT…KPRN), and 498–523 (RRLT…IRFS). Positions 462 to 494 (LTRRLSQRPTAEELEQRNILKPRNEQEEQEEKR) are disordered. Ser-467 carries the post-translational modification Phosphoserine. The span at 471 to 494 (TAEELEQRNILKPRNEQEEQEEKR) shows a compositional bias: basic and acidic residues. Position 505 is a phosphoserine (Ser-505).

The protein belongs to the phosphatase and actin regulator family. Interacts (via RPEL repeats) with ACTA1 and PPP1CA; ACTA1 and PPP1CA compete for the same binding site. Selectively expressed in brain. High levels are found in the olfactory tubercle, nucleus accumbens core and shell, caudate-putamen, cerebral cortex, hippocampus and piriform cortex. Moderate to high levels in the olfactory bulb, arcuate and ventromedial hypothalamus, subthalamic nucleus, amygdala, lateral septum, habenula and thalamus. Low expression, if any, in substantia nigra pars compacta/pars reticula and globus pallidus (at protein level).

It is found in the cytoplasm. Its subcellular location is the synapse. It localises to the nucleus. In terms of biological role, binds actin monomers (G actin) and plays a role in multiple processes including the regulation of actin cytoskeleton dynamics, actin stress fibers formation, cell motility and survival, formation of tubules by endothelial cells, and regulation of PPP1CA activity. Involved in the regulation of cortical neuron migration and dendrite arborization. In Rattus norvegicus (Rat), this protein is Phosphatase and actin regulator 1 (Phactr1).